Reading from the N-terminus, the 245-residue chain is Putative binding protein HI_1525 (245 aa).

The signal sequence occupies residues 1–19; that stretch reads MKKLVAVTSMILTTFSVQA. Molybdate-binding residues include Ser-56 and Val-163.

Belongs to the bacterial solute-binding protein ModA family.

It localises to the periplasm. Probably involved in the binding-dependent system. The protein is Putative binding protein HI_1525 of Haemophilus influenzae (strain ATCC 51907 / DSM 11121 / KW20 / Rd).